The primary structure comprises 469 residues: SHC-transforming protein 1 (469 aa).

Positions 1–26 are disordered; the sequence is MNKLSGGGGRRTRVEGGQLGGEEWTR. Phosphoserine is present on Ser-29. N6-acetyllysine is present on Lys-44. In terms of domain architecture, PID spans 46–229; it reads MGPGVSYLVR…AGFDGSAWDE (184 aa). Residues 230–373 are CH1; that stretch reads EEEELPDHQY…SMAEQLQGES (144 aa). 3 positions are modified to phosphotyrosine: Tyr-239, Tyr-240, and Tyr-313. Positions 322–344 are disordered; it reads ARQAGGGAGPPNPSVNGSAPRDL. Ser-339 carries the phosphoserine modification. The 92-residue stretch at 374-465 folds into the SH2 domain; that stretch reads WFHGKLSRRE…GSELCLQQPV (92 aa).

As to quaternary structure, interacts with CPNE3; this interaction may mediate the binding of CPNE3 with ERBB2. Interacts with the NPXY motif of tyrosine-phosphorylated IGF1R and INSR in vitro via the PID domain. Once activated, binds to GRB2. Interacts with tyrosine-phosphorylated CD3T and DDR2. Interacts with the N-terminal region of APS. Interacts with phosphorylated LRP1 and IRS4. Interacts with INPP5D/SHIP1 and INPPL1/SHIP2. Interacts with ALK, GAB2, GRB7 and KIT. Interacts with PTPN6/SHP (tyrosine phosphorylated). Identified in a complex containing FGFR4, NCAM1, CDH2, PLCG1, FRS2A, SRC, SHC1, GAP43 and CTTN. Interacts with EPHB1 and GRB2; activates the MAPK/ERK cascade to regulate cell migration. Interacts with PDGFRB (tyrosine-phosphorylated). Interacts with ERBB4. Interacts with TEK/TIE2 (tyrosine-phosphorylated). Interacts with PTK2/FAK1. Interacts with FLT4 (tyrosine-phosphorylated). Interacts with the Trk receptors NTRK1, NTRK2 and NTRK3; in a phosphotyrosine-dependent manner. Interacts with CEACAM1; this interaction is CEACAM1-phosphorylation-dependent and mediates interaction with EGFR or INSR resulting in decrease coupling of SHC1 to the MAPK3/ERK1-MAPK1/ERK2 pathway. Interacts (via PID domain) with PEAK1 (when phosphorylated). Found in a complex with PPP1CA, PPP1CC, SHC1 and PEAK1. Phosphorylated by activated epidermal growth factor receptor. Phosphorylated in response to KIT signaling. Tyrosine phosphorylated in response to FLT3 signaling and by ligand-activated ALK. Tyrosine phosphorylated by TEK/TIE2. Tyrosine phosphorylated by ligand-activated PDGFRB. May be tyrosine phosphorylated by activated PTK2/FAK1. Dephosphorylation by PTPN2 may regulate interaction with GRB2. Phosphorylated in response to FLT4 signaling. Tyrosine phosphorylated by activated PTK2B/PYK2.

The protein resides in the cytoplasm. It localises to the cell junction. It is found in the focal adhesion. Functionally, signaling adapter that couples activated growth factor receptors to signaling pathways. Participates in a signaling cascade initiated by activated KIT and KITLG/SCF. Participates in signaling downstream of the angiopoietin receptor TEK/TIE2, and plays a role in the regulation of endothelial cell migration and sprouting angiogenesis. This Rattus norvegicus (Rat) protein is SHC-transforming protein 1 (Shc1).